The chain runs to 276 residues: MKTPFERLALYDINASIKEGSYVAVIGHTGSGKSTLLQHLNGLLKPTKGQISLGSTVIQAGKKNKDLKKLRKKVGIVFQFPEHQLFEETVLKDISFGPMNFGVKKEDAEQKAREMLQLVGLSEELLDRSPFELSGGQMRRVAIAGVLAMDPEVLVLDEPTAGLDPRGRKEIMDMFYELHQRGNLTTILVTHSMEDAAAYADEMIVMHKGTIQASGSPRDLFLKGEEMAGWGLDLPETIKFQRHLEAALGVRFNEPMLTIEDAAAEIRALFQGEKTL.

Positions 1 to 233 (MKTPFERLAL…GEEMAGWGLD (233 aa)) constitute an ABC transporter domain. 27–34 (GHTGSGKS) serves as a coordination point for ATP. Glu-158 serves as the catalytic Proton acceptor.

It belongs to the ABC transporter superfamily. Energy-coupling factor EcfA family. Forms a stable energy-coupling factor (ECF) transporter complex composed of 2 membrane-embedded substrate-binding proteins (S component), 2 ATP-binding proteins (A component) and 2 transmembrane proteins (T component).

Its subcellular location is the cell membrane. In terms of biological role, ATP-binding (A) component of a common energy-coupling factor (ECF) ABC-transporter complex. Unlike classic ABC transporters this ECF transporter provides the energy necessary to transport a number of different substrates. The protein is Energy-coupling factor transporter ATP-binding protein EcfA2 of Bacillus subtilis (strain 168).